The primary structure comprises 188 residues: Large ribosomal subunit protein eL18 (188 aa).

The segment at 143–188 (RSAREAEKHFGPAPGVPHSHTKPHVRSKGRKFERARGRRASRAYKN) is disordered. 2 stretches are compositionally biased toward basic residues: residues 161 to 171 (SHTKPHVRSKG) and 178 to 188 (RGRRASRAYKN).

The protein belongs to the eukaryotic ribosomal protein eL18 family.

Its subcellular location is the cytoplasm. The chain is Large ribosomal subunit protein eL18 (rpl-18) from Caenorhabditis briggsae.